Here is a 385-residue protein sequence, read N- to C-terminus: ATP phosphoribosyltransferase regulatory subunit (385 aa).

Belongs to the class-II aminoacyl-tRNA synthetase family. HisZ subfamily. Heteromultimer composed of HisG and HisZ subunits.

Its subcellular location is the cytoplasm. The protein operates within amino-acid biosynthesis; L-histidine biosynthesis; L-histidine from 5-phospho-alpha-D-ribose 1-diphosphate: step 1/9. Required for the first step of histidine biosynthesis. May allow the feedback regulation of ATP phosphoribosyltransferase activity by histidine. The protein is ATP phosphoribosyltransferase regulatory subunit of Bordetella petrii (strain ATCC BAA-461 / DSM 12804 / CCUG 43448).